We begin with the raw amino-acid sequence, 202 residues long: Putative pituitary tumor-transforming gene 3 protein (202 aa).

Residues 61–64 (RKAL) carry the D-box motif. Residues 163–173 (PPSPLKMPSPP) carry the SH3-binding motif.

The protein belongs to the securin family.

It localises to the cytoplasm. The protein resides in the nucleus. This Pan troglodytes (Chimpanzee) protein is Putative pituitary tumor-transforming gene 3 protein (PTTG3).